Reading from the N-terminus, the 775-residue chain is uncharacterized protein (775 aa).

The next 5 helical transmembrane spans lie at 16 to 36 (KLLI…GVFL), 585 to 605 (PYIL…VFPL), 625 to 645 (VMML…LLGI), 655 to 675 (FYVF…FLAT), and 742 to 762 (GVLI…FTML).

The protein to L.lactis phage infection protein (PIP).

Its subcellular location is the cell membrane. This is an uncharacterized protein from Bacillus subtilis (strain 168).